The following is a 145-amino-acid chain: MAPKAAAGKKPAEKKPVEEKKAEEVPAEKKPKAGKKLPKDAGRPDKKKKRAKKSIETYKIYIFKVLKQVHPDIGISSKSMGIMNSFINDIFEKLAQESSRLARYNKKPTITSREIQTAVRLVLPGELAKHAVSEGTKAVTKFTSS.

Positions 1–52 (MAPKAAAGKKPAEKKPVEEKKAEEVPAEKKPKAGKKLPKDAGRPDKKKKRAK) are disordered. An N6-acetyllysine mark is found at lysine 9, lysine 35, and lysine 36. A compositionally biased stretch (basic and acidic residues) spans 10–44 (KPAEKKPVEEKKAEEVPAEKKPKAGKKLPKDAGRP). A Glycyl lysine isopeptide (Lys-Gly) (interchain with G-Cter in ubiquitin) cross-link involves residue lysine 141.

It belongs to the histone H2B family. As to quaternary structure, the nucleosome is a histone octamer containing two molecules each of H2A, H2B, H3 and H4 assembled in one H3-H4 heterotetramer and two H2A-H2B heterodimers. The octamer wraps approximately 147 bp of DNA. Post-translationally, can be acetylated to form H2BK6ac, H2BK33ac and H2BK34ac. Monoubiquitinated to form H2BK143ub1; may give a specific tag for epigenetic transcriptional activation. As to expression, in anthers, floral buds, pollen, petals and fruits.

It is found in the nucleus. The protein localises to the chromosome. Functionally, core component of nucleosome. Nucleosomes wrap and compact DNA into chromatin, limiting DNA accessibility to the cellular machineries which require DNA as a template. Histones thereby play a central role in transcription regulation, DNA repair, DNA replication and chromosomal stability. DNA accessibility is regulated via a complex set of post-translational modifications of histones, also called histone code, and nucleosome remodeling. The polypeptide is Histone H2B (HIS2B) (Capsicum annuum (Capsicum pepper)).